Here is a 277-residue protein sequence, read N- to C-terminus: Hydroxyethylthiazole kinase (277 aa).

M56 contributes to the substrate binding site. Positions 131 and 177 each coordinate ATP. Residue A204 coordinates substrate.

The protein belongs to the Thz kinase family. Requires Mg(2+) as cofactor.

The catalysed reaction is 5-(2-hydroxyethyl)-4-methylthiazole + ATP = 4-methyl-5-(2-phosphooxyethyl)-thiazole + ADP + H(+). It participates in cofactor biosynthesis; thiamine diphosphate biosynthesis; 4-methyl-5-(2-phosphoethyl)-thiazole from 5-(2-hydroxyethyl)-4-methylthiazole: step 1/1. Catalyzes the phosphorylation of the hydroxyl group of 4-methyl-5-beta-hydroxyethylthiazole (THZ). The chain is Hydroxyethylthiazole kinase from Gemmatimonas aurantiaca (strain DSM 14586 / JCM 11422 / NBRC 100505 / T-27).